Here is a 424-residue protein sequence, read N- to C-terminus: UPF0597 protein Sputw3181_2955 (424 aa).

It belongs to the UPF0597 family.

This is UPF0597 protein Sputw3181_2955 from Shewanella sp. (strain W3-18-1).